We begin with the raw amino-acid sequence, 370 residues long: (5-formylfuran-3-yl)methyl phosphate transaminase (370 aa).

Lys222 carries the post-translational modification N6-(pyridoxal phosphate)lysine.

This sequence belongs to the class-I pyridoxal-phosphate-dependent aminotransferase family. In terms of assembly, homodimer. Requires pyridoxal 5'-phosphate as cofactor.

Its subcellular location is the cytoplasm. The enzyme catalyses 4-(hydroxymethyl)-2-furancarboxaldehyde phosphate + L-alanine = [5-(aminomethyl)-3-furyl]methyl phosphate + pyruvate. The protein operates within cofactor biosynthesis; methanofuran biosynthesis. In terms of biological role, catalyzes the transamination reaction between 4-(hydroxymethyl)-2-furancarboxaldehyde phosphate (4-HFC-P) and alanine to produce pyruvate and 5-(aminomethyl)-3-furanmethanol phosphate (F1-P), the precursor for the furan moiety in methanofuran. In Methanocaldococcus jannaschii (strain ATCC 43067 / DSM 2661 / JAL-1 / JCM 10045 / NBRC 100440) (Methanococcus jannaschii), this protein is (5-formylfuran-3-yl)methyl phosphate transaminase.